Reading from the N-terminus, the 560-residue chain is Membrane protein insertase YidC (560 aa).

Residues 1–21 form a helical membrane-spanning segment; that stretch reads MDIKRTILIAALAVVSYVMVL. The tract at residues 42–66 is disordered; sequence VAPGLPDGVPAGNNGASADVPSANA. 5 helical membrane-spanning segments follow: residues 341 to 361, 367 to 387, 437 to 457, 468 to 488, and 515 to 535; these read LELTVDYGFLWFIAQPIFWLL, LLGNWGWSIIVLTMLIKGLFF, LGGCLPILVQMPVFLALYWVL, WILWITDLSIKDPFFILPIIM, and PIIFTFFFLWFPAGLVLYWVV.

This sequence belongs to the OXA1/ALB3/YidC family. Type 1 subfamily. In terms of assembly, interacts with the Sec translocase complex via SecD. Specifically interacts with transmembrane segments of nascent integral membrane proteins during membrane integration.

Its subcellular location is the cell inner membrane. Its function is as follows. Required for the insertion and/or proper folding and/or complex formation of integral membrane proteins into the membrane. Involved in integration of membrane proteins that insert both dependently and independently of the Sec translocase complex, as well as at least some lipoproteins. Aids folding of multispanning membrane proteins. The polypeptide is Membrane protein insertase YidC (Pseudomonas putida (strain ATCC 47054 / DSM 6125 / CFBP 8728 / NCIMB 11950 / KT2440)).